Reading from the N-terminus, the 228-residue chain is ATP-dependent dethiobiotin synthetase BioD (228 aa).

Residue 12–17 coordinates ATP; the sequence is EIGKTT. Threonine 16 lines the Mg(2+) pocket. Lysine 37 is an active-site residue. Position 41 (serine 41) interacts with substrate. ATP-binding positions include aspartate 54, 116–119, and 205–207; these read EGAG and PRL. Positions 54 and 116 each coordinate Mg(2+).

The protein belongs to the dethiobiotin synthetase family. In terms of assembly, homodimer. It depends on Mg(2+) as a cofactor.

The protein resides in the cytoplasm. The catalysed reaction is (7R,8S)-7,8-diammoniononanoate + CO2 + ATP = (4R,5S)-dethiobiotin + ADP + phosphate + 3 H(+). The protein operates within cofactor biosynthesis; biotin biosynthesis; biotin from 7,8-diaminononanoate: step 1/2. Catalyzes a mechanistically unusual reaction, the ATP-dependent insertion of CO2 between the N7 and N8 nitrogen atoms of 7,8-diaminopelargonic acid (DAPA, also called 7,8-diammoniononanoate) to form a ureido ring. The protein is ATP-dependent dethiobiotin synthetase BioD of Pseudomonas aeruginosa (strain ATCC 15692 / DSM 22644 / CIP 104116 / JCM 14847 / LMG 12228 / 1C / PRS 101 / PAO1).